We begin with the raw amino-acid sequence, 267 residues long: 4-hydroxy-tetrahydrodipicolinate reductase (267 aa).

8–13 (GANGRM) serves as a coordination point for NAD(+). Residue Arg-35 coordinates NADP(+). NAD(+) contacts are provided by residues 98–100 (GTT) and 122–125 (AANY). Residue His-155 is the Proton donor/acceptor of the active site. His-156 serves as a coordination point for (S)-2,3,4,5-tetrahydrodipicolinate. The active-site Proton donor is the Lys-159. Position 165 to 166 (165 to 166 (GT)) interacts with (S)-2,3,4,5-tetrahydrodipicolinate.

The protein belongs to the DapB family.

It localises to the cytoplasm. It catalyses the reaction (S)-2,3,4,5-tetrahydrodipicolinate + NAD(+) + H2O = (2S,4S)-4-hydroxy-2,3,4,5-tetrahydrodipicolinate + NADH + H(+). The catalysed reaction is (S)-2,3,4,5-tetrahydrodipicolinate + NADP(+) + H2O = (2S,4S)-4-hydroxy-2,3,4,5-tetrahydrodipicolinate + NADPH + H(+). It participates in amino-acid biosynthesis; L-lysine biosynthesis via DAP pathway; (S)-tetrahydrodipicolinate from L-aspartate: step 4/4. Its function is as follows. Catalyzes the conversion of 4-hydroxy-tetrahydrodipicolinate (HTPA) to tetrahydrodipicolinate. In Pseudoalteromonas atlantica (strain T6c / ATCC BAA-1087), this protein is 4-hydroxy-tetrahydrodipicolinate reductase.